Here is a 303-residue protein sequence, read N- to C-terminus: Glutathione transport system permease protein GsiD (303 aa).

Transmembrane regions (helical) follow at residues 40-60 (AMTAALFVILLIVVAIFARWI), 105-125 (LAAGVFAVFIGAAIGTLLGLL), 144-164 (LFAFPGILLAIAVVAVLGSGI), 165-185 (ANVIIAVAIFSIPAFARLVRG), 222-242 (IVVFFTMRIGTSIISAASLSF), and 266-286 (VIAPHVAVFPALAIFLTVLAF). Residues 101–290 (AQISLAAGVF…LTVLAFNLLG (190 aa)) enclose the ABC transmembrane type-1 domain.

This sequence belongs to the binding-protein-dependent transport system permease family. As to quaternary structure, the complex is composed of two ATP-binding proteins (GsiA), two transmembrane proteins (GsiC and GsiD) and a solute-binding protein (GsiB).

The protein resides in the cell inner membrane. Functionally, part of the ABC transporter complex GsiABCD involved in glutathione import. Probably responsible for the translocation of the substrate across the membrane. This is Glutathione transport system permease protein GsiD from Escherichia coli O157:H7.